The following is a 158-amino-acid chain: uncharacterized protein (158 aa).

Residues 13–110 (ESVGRALELV…WGDEYLPRPE (98 aa)) enclose the HTH hxlR-type domain.

This is an uncharacterized protein from Mycobacterium tuberculosis (strain ATCC 25618 / H37Rv).